A 339-amino-acid chain; its full sequence is Phenylalanine--tRNA ligase alpha subunit (339 aa).

Glu-254 contacts Mg(2+).

The protein belongs to the class-II aminoacyl-tRNA synthetase family. Phe-tRNA synthetase alpha subunit type 1 subfamily. As to quaternary structure, tetramer of two alpha and two beta subunits. Mg(2+) serves as cofactor.

It is found in the cytoplasm. It catalyses the reaction tRNA(Phe) + L-phenylalanine + ATP = L-phenylalanyl-tRNA(Phe) + AMP + diphosphate + H(+). The protein is Phenylalanine--tRNA ligase alpha subunit of Dictyoglomus turgidum (strain DSM 6724 / Z-1310).